We begin with the raw amino-acid sequence, 164 residues long: Endoribonuclease YbeY (164 aa).

His132, His136, and His142 together coordinate Zn(2+).

The protein belongs to the endoribonuclease YbeY family. It depends on Zn(2+) as a cofactor.

It localises to the cytoplasm. Functionally, single strand-specific metallo-endoribonuclease involved in late-stage 70S ribosome quality control and in maturation of the 3' terminus of the 16S rRNA. The polypeptide is Endoribonuclease YbeY (Clostridium kluyveri (strain NBRC 12016)).